The chain runs to 252 residues: uncharacterized protein (252 aa).

An HTH deoR-type domain is found at 3-58 (AKDRIQAIKQMVANDKKVTVSNLSGIFQVTEETIRRDLEKLEDEGFLTRTYGGAVL). Residues 20 to 39 (VTVSNLSGIFQVTEETIRRD) constitute a DNA-binding region (H-T-H motif).

This is an uncharacterized protein from Escherichia coli (strain K12).